The sequence spans 333 residues: Eukaryotic translation initiation factor 2 subunit 2 (333 aa).

Disordered regions lie at residues 1–119 (MSGD…DLDI) and 139–164 (ILEK…NQTG). Serine 2 is subject to N-acetylserine. A phosphoserine mark is found at serine 2 and serine 13. A compositionally biased stretch (basic residues) spans 13–22 (SKKKKKKKKP). 2 positions are modified to phosphothreonine: threonine 31 and threonine 36. Basic and acidic residues predominate over residues 40-51 (ETKEVEPEPTED). Serine 67 is subject to Phosphoserine. Residues 96–105 (EGVKDLKIES) show a composition bias toward basic and acidic residues. Lysine 102 is covalently cross-linked (Glycyl lysine isopeptide (Lys-Gly) (interchain with G-Cter in SUMO2)). Serine 105 is subject to Phosphoserine. Acidic residues-rich tracts occupy residues 106–118 (DVQE…DDLD) and 139–149 (ILEKDEALEDE). Phosphothreonine is present on threonine 111. A phosphoserine mark is found at serine 158 and serine 218. Lysine 265 and lysine 293 each carry N6-acetyllysine. The C4-type zinc-finger motif lies at 281-305 (CHTCRSPDTILQKDTRLYFLQCETC).

Belongs to the eIF-2-beta/eIF-5 family. Eukaryotic translation initiation factor 2 eIF2 is a heterotrimeric complex composed of an alpha (EIF2S1), a beta (EIF2S2) and a gamma (EIF2S3) chain. eIF2 is member of the 43S pre-initiation complex (43S PIC). eIF2 forms a complex with at least CELF1/CUGBP1, CALR, CALR3, EIF2S1, EIF2S2, HSP90B1 and HSPA5. Interacts with BZW2/5MP1. Interacts with EIF5.

The protein localises to the cytoplasm. It is found in the cytosol. Its function is as follows. Component of the eIF2 complex that functions in the early steps of protein synthesis by forming a ternary complex with GTP and initiator tRNA. This complex binds to a 40S ribosomal subunit, followed by mRNA binding to form the 43S pre-initiation complex (43S PIC). Junction of the 60S ribosomal subunit to form the 80S initiation complex is preceded by hydrolysis of the GTP bound to eIF2 and release of an eIF2-GDP binary complex. In order for eIF2 to recycle and catalyze another round of initiation, the GDP bound to eIF2 must exchange with GTP by way of a reaction catalyzed by eIF2B. This chain is Eukaryotic translation initiation factor 2 subunit 2 (EIF2S2), found in Pongo abelii (Sumatran orangutan).